Consider the following 127-residue polypeptide: Ribonuclease P protein component (127 aa).

Belongs to the RnpA family. In terms of assembly, consists of a catalytic RNA component (M1 or rnpB) and a protein subunit.

It carries out the reaction Endonucleolytic cleavage of RNA, removing 5'-extranucleotides from tRNA precursor.. RNaseP catalyzes the removal of the 5'-leader sequence from pre-tRNA to produce the mature 5'-terminus. It can also cleave other RNA substrates such as 4.5S RNA. The protein component plays an auxiliary but essential role in vivo by binding to the 5'-leader sequence and broadening the substrate specificity of the ribozyme. The protein is Ribonuclease P protein component of Prochlorococcus marinus (strain SARG / CCMP1375 / SS120).